The primary structure comprises 972 residues: Macrophage colony-stimulating factor 1 receptor (972 aa).

The N-terminal stretch at 1–19 (MGPGVLLLLLVATAWHGQG) is a signal peptide. Residues 20–517 (IPVIEPSVPE…HPPDEFLFTP (498 aa)) lie on the Extracellular side of the membrane. 5 Ig-like C2-type domains span residues 21-104 (PVIE…VKDP), 107-197 (PWNV…KVQK), 203-290 (PALT…HSTS), 299-399 (AYLN…LTLR), and 402-502 (PEVS…IPIS). Intrachain disulfides connect cysteine 42/cysteine 84, cysteine 127/cysteine 177, and cysteine 224/cysteine 278. Asparagine 45, asparagine 73, asparagine 153, asparagine 240, asparagine 275, asparagine 302, asparagine 335, asparagine 353, asparagine 412, asparagine 428, and asparagine 480 each carry an N-linked (GlcNAc...) asparagine glycan. Cysteine 419 and cysteine 485 form a disulfide bridge. A helical transmembrane segment spans residues 518–538 (VVVACMSIMALLLLLLLLLLY). Topologically, residues 539–972 (KYKQKPKYQV…LLQPNNYQFC (434 aa)) are cytoplasmic. The segment at 542-574 (QKPKYQVRWKIIESYEGNSYTFIDPTQLPYNEK) is regulatory juxtamembrane domain. A phosphotyrosine; by autocatalysis mark is found at tyrosine 546 and tyrosine 561. Positions 582-910 (LQFGKTLGAG…PTFQQICSFL (329 aa)) constitute a Protein kinase domain. ATP-binding positions include 588 to 596 (LGAGAFGKV) and lysine 616. Tyrosine 699 and tyrosine 708 each carry phosphotyrosine; by autocatalysis. At serine 713 the chain carries Phosphoserine. Residue tyrosine 723 is modified to Phosphotyrosine; by autocatalysis. Aspartate 778 (proton acceptor) is an active-site residue. An activation loop region spans residues 796–818 (DFGLARDIMNDSNYIVKGNARLP). Phosphotyrosine; by autocatalysis occurs at positions 809 and 923. The interval 918-950 (RRERDYTNLPSSSRSGGSGSSSSELEEESSSEH) is disordered. The span at 928-940 (SSSRSGGSGSSSS) shows a compositional bias: low complexity. Position 969 is a phosphotyrosine; by autocatalysis (tyrosine 969).

It belongs to the protein kinase superfamily. Tyr protein kinase family. CSF-1/PDGF receptor subfamily. In terms of assembly, interacts with INPPL1/SHIP2 and THOC5. Monomer. Homodimer. Interacts with CSF1 and IL34. Interaction with dimeric CSF1 or IL34 leads to receptor homodimerization. Interacts (tyrosine phosphorylated) with PLCG2 (via SH2 domain). Interacts (tyrosine phosphorylated) with PIK3R1 (via SH2 domain). Interacts (tyrosine phosphorylated) with FYN, YES1 and SRC (via SH2 domain). Interacts (tyrosine phosphorylated) with CBL, GRB2 and SLA2. Post-translationally, autophosphorylated in response to CSF1 or IL34 binding. Phosphorylation at Tyr-561 is important for normal down-regulation of signaling by ubiquitination, internalization and degradation. Phosphorylation at Tyr-561 and Tyr-809 is important for interaction with SRC family members, including FYN, YES1 and SRC, and for subsequent activation of these protein kinases. Phosphorylation at Tyr-699 and Tyr-923 is important for interaction with GRB2. Phosphorylation at Tyr-723 is important for interaction with PIK3R1. Phosphorylation at Tyr-708 is important for normal receptor degradation. Phosphorylation at Tyr-723 and Tyr-809 is important for interaction with PLCG2. Phosphorylation at Tyr-969 is important for interaction with CBL. Dephosphorylation by PTPN2 negatively regulates downstream signaling and macrophage differentiation. Ubiquitinated. Becomes rapidly polyubiquitinated after autophosphorylation, leading to its degradation. In terms of tissue distribution, expressed in bone marrow and in differentiated blood mononuclear cells.

The protein localises to the cell membrane. It catalyses the reaction L-tyrosyl-[protein] + ATP = O-phospho-L-tyrosyl-[protein] + ADP + H(+). Present in an inactive conformation in the absence of bound ligand. CSF1 or IL34 binding leads to dimerization and activation by autophosphorylation on tyrosine residues. Inhibited by imatinib/STI-571 (Gleevec), dasatinib, sunitinib/SU11248, lestaurtinib/CEP-701, midostaurin/PKC-412, Ki20227, linifanib/ABT-869, Axitinib/AG013736, sorafenib/BAY 43-9006 and GW2580. Its function is as follows. Tyrosine-protein kinase that acts as a cell-surface receptor for CSF1 and IL34 and plays an essential role in the regulation of survival, proliferation and differentiation of hematopoietic precursor cells, especially mononuclear phagocytes, such as macrophages and monocytes. Promotes the release of pro-inflammatory chemokines in response to IL34 and CSF1, and thereby plays an important role in innate immunity and in inflammatory processes. Plays an important role in the regulation of osteoclast proliferation and differentiation, the regulation of bone resorption, and is required for normal bone and tooth development. Required for normal male and female fertility, and for normal development of milk ducts and acinar structures in the mammary gland during pregnancy. Promotes reorganization of the actin cytoskeleton, regulates formation of membrane ruffles, cell adhesion and cell migration, and promotes cancer cell invasion. Activates several signaling pathways in response to ligand binding, including the ERK1/2 and the JNK pathway. Phosphorylates PIK3R1, PLCG2, GRB2, SLA2 and CBL. Activation of PLCG2 leads to the production of the cellular signaling molecules diacylglycerol and inositol 1,4,5-trisphosphate, that then lead to the activation of protein kinase C family members, especially PRKCD. Phosphorylation of PIK3R1, the regulatory subunit of phosphatidylinositol 3-kinase, leads to activation of the AKT1 signaling pathway. Activated CSF1R also mediates activation of the MAP kinases MAPK1/ERK2 and/or MAPK3/ERK1, and of the SRC family kinases SRC, FYN and YES1. Activated CSF1R transmits signals both via proteins that directly interact with phosphorylated tyrosine residues in its intracellular domain, or via adapter proteins, such as GRB2. Promotes activation of STAT family members STAT3, STAT5A and/or STAT5B. Promotes tyrosine phosphorylation of SHC1 and INPP5D/SHIP-1. Receptor signaling is down-regulated by protein phosphatases, such as INPP5D/SHIP-1, that dephosphorylate the receptor and its downstream effectors, and by rapid internalization of the activated receptor. In the central nervous system, may play a role in the development of microglia macrophages. The protein is Macrophage colony-stimulating factor 1 receptor (CSF1R) of Homo sapiens (Human).